Here is a 140-residue protein sequence, read N- to C-terminus: ATP synthase epsilon chain (140 aa).

The protein belongs to the ATPase epsilon chain family. F-type ATPases have 2 components, CF(1) - the catalytic core - and CF(0) - the membrane proton channel. CF(1) has five subunits: alpha(3), beta(3), gamma(1), delta(1), epsilon(1). CF(0) has three main subunits: a, b and c.

It localises to the cell inner membrane. Its function is as follows. Produces ATP from ADP in the presence of a proton gradient across the membrane. The chain is ATP synthase epsilon chain from Colwellia maris.